We begin with the raw amino-acid sequence, 454 residues long: tRNA modification GTPase MnmE (454 aa).

The (6S)-5-formyl-5,6,7,8-tetrahydrofolate site is built by Arg23, Glu80, and Lys120. Residues Gly216 to Gly377 form the TrmE-type G domain. Residue Asn226 coordinates K(+). GTP contacts are provided by residues Asn226–Ser231, Thr245–Thr251, Asp270–Gly273, Asn335–Asp338, and Ser358–Arg360. Residue Ser230 coordinates Mg(2+). 3 residues coordinate K(+): Thr245, Ile247, and Thr250. Thr251 lines the Mg(2+) pocket. Lys454 contacts (6S)-5-formyl-5,6,7,8-tetrahydrofolate.

The protein belongs to the TRAFAC class TrmE-Era-EngA-EngB-Septin-like GTPase superfamily. TrmE GTPase family. Homodimer. Heterotetramer of two MnmE and two MnmG subunits. K(+) is required as a cofactor.

It is found in the cytoplasm. Exhibits a very high intrinsic GTPase hydrolysis rate. Involved in the addition of a carboxymethylaminomethyl (cmnm) group at the wobble position (U34) of certain tRNAs, forming tRNA-cmnm(5)s(2)U34. This Citrobacter koseri (strain ATCC BAA-895 / CDC 4225-83 / SGSC4696) protein is tRNA modification GTPase MnmE.